Here is a 464-residue protein sequence, read N- to C-terminus: Nuclear distribution protein nudF 2 (464 aa).

One can recognise a LisH domain in the interval 9–41 (QAAELNKSIIAYLSAHGLAETLAAFRKESDFPD). Residues 63 to 88 (NSTLMKKLLALESHNKALRNELNSTR) are a coiled coil. WD repeat units follow at residues 112-151 (SHRD…LERT), 154-195 (GHTM…KNVK), 199-238 (GHDH…RVKT), 241-280 (DHTG…PICK), 285-343 (GHEN…MTLT), 344-383 (GHAS…RCVK), 388-424 (AHDG…AELP), and 426-464 (SKLD…RSHK).

It belongs to the WD repeat LIS1/nudF family. Self-associates. Interacts with nudE and dynein.

It localises to the cytoplasm. The protein resides in the cytoskeleton. Its subcellular location is the spindle pole. Positively regulates the activity of the minus-end directed microtubule motor protein dynein. May enhance dynein-mediated microtubule sliding by targeting dynein to the microtubule plus end. Required for nuclear migration during vegetative growth as well as development. Required for retrograde early endosome (EE) transport from the hyphal tip. Required for localization of dynein to the mitotic spindle poles. Recruits additional proteins to the dynein complex at SPBs. This Penicillium rubens (strain ATCC 28089 / DSM 1075 / NRRL 1951 / Wisconsin 54-1255) (Penicillium chrysogenum) protein is Nuclear distribution protein nudF 2.